The following is a 149-amino-acid chain: Large ribosomal subunit protein uL24 (149 aa).

The interval 114-149 (RKIIERSGGTPEVEAVPEKSEEEKEEKEKEEEKSEE) is disordered. The span at 129-149 (VPEKSEEEKEEKEKEEEKSEE) shows a compositional bias: basic and acidic residues.

This sequence belongs to the universal ribosomal protein uL24 family. In terms of assembly, part of the 50S ribosomal subunit.

Its function is as follows. One of two assembly initiator proteins, it binds directly to the 5'-end of the 23S rRNA, where it nucleates assembly of the 50S subunit. Located at the polypeptide exit tunnel on the outside of the subunit. This is Large ribosomal subunit protein uL24 from Methanopyrus kandleri (strain AV19 / DSM 6324 / JCM 9639 / NBRC 100938).